A 468-amino-acid polypeptide reads, in one-letter code: uncharacterized protein (468 aa).

The interval 447 to 468 (AVHVSNGDKPKVALPDTQLGSH) is disordered.

It belongs to the mycobacterial PPE family.

This is an uncharacterized protein from Mycobacterium tuberculosis (strain ATCC 25618 / H37Rv).